The following is a 932-amino-acid chain: Valine--tRNA ligase (932 aa).

Residues 75-85 (PNVTGQLHMGH) carry the 'HIGH' region motif. Positions 568–572 (KMSKS) match the 'KMSKS' region motif. Lys571 lines the ATP pocket. The stretch at 863–929 (TVDVAAERKR…ERITARLEGL (67 aa)) forms a coiled coil.

The protein belongs to the class-I aminoacyl-tRNA synthetase family. ValS type 1 subfamily. Monomer.

It is found in the cytoplasm. The catalysed reaction is tRNA(Val) + L-valine + ATP = L-valyl-tRNA(Val) + AMP + diphosphate. In terms of biological role, catalyzes the attachment of valine to tRNA(Val). As ValRS can inadvertently accommodate and process structurally similar amino acids such as threonine, to avoid such errors, it has a 'posttransfer' editing activity that hydrolyzes mischarged Thr-tRNA(Val) in a tRNA-dependent manner. In Corynebacterium jeikeium (strain K411), this protein is Valine--tRNA ligase.